We begin with the raw amino-acid sequence, 283 residues long: Acetylglutamate kinase (283 aa).

Substrate-binding positions include 63 to 64 (GG), R85, and N178.

It belongs to the acetylglutamate kinase family. ArgB subfamily.

Its subcellular location is the cytoplasm. The catalysed reaction is N-acetyl-L-glutamate + ATP = N-acetyl-L-glutamyl 5-phosphate + ADP. It functions in the pathway amino-acid biosynthesis; L-arginine biosynthesis; N(2)-acetyl-L-ornithine from L-glutamate: step 2/4. Functionally, catalyzes the ATP-dependent phosphorylation of N-acetyl-L-glutamate. The protein is Acetylglutamate kinase of Prochlorococcus marinus (strain MIT 9301).